Reading from the N-terminus, the 462-residue chain is Argininosuccinate lyase (462 aa).

This sequence belongs to the lyase 1 family. Argininosuccinate lyase subfamily.

The protein resides in the cytoplasm. It catalyses the reaction 2-(N(omega)-L-arginino)succinate = fumarate + L-arginine. Its pathway is amino-acid biosynthesis; L-arginine biosynthesis; L-arginine from L-ornithine and carbamoyl phosphate: step 3/3. The sequence is that of Argininosuccinate lyase from Nitratiruptor sp. (strain SB155-2).